The following is a 1135-amino-acid chain: LRR receptor-like serine/threonine-protein kinase RGI2 (1135 aa).

The N-terminal stretch at 1-35 is a signal peptide; that stretch reads MSLQMPIPRKKALTVSHFSITLSLFLAFFISSTSA. Topologically, residues 36–723 are extracellular; it reads STNEVSALIS…QRGVHSHRLR (688 aa). A disulfide bond links Cys69 and Cys76. N-linked (GlcNAc...) asparagine glycosylation is found at Asn101 and Asn117. LRR repeat units lie at residues 105–129, 130–153, 154–177, and 179–203; these read FTSL…IGDC, SELI…LGKL, KNLQ…LGDC, and SLKN…KIST. 4 short sequence motifs (small peptide recognition) span residues 186–187, 208–211, 231–236, and Tyr259; these read FD, RAGG, and VLGLAA. LRR repeat units follow at residues 226–250, 251–274, 276–298, 299–323, 325–345, 346–370, 372–395, 397–418, 419–442, 444–466, 467–490, 491–514, 516–538, 539–562, 564–586, 587–610, 612–634, 635–658, and 659–683; these read CRNL…LGQL, SKLQ…LGNC, ELIN…LGKL, QNLE…GFMK, LNAI…SFGN, LSNL…LSNC, KLVQ…GLLK, LNIF…LAGC, QNLQ…LFQL, NLTK…IGNC, TSLV…IGFL, QNLS…ISNC, QLQM…LSSL, TKLQ…LGHL, SLNR…LGHC, TNLQ…LFDI, DLDI…RISA, LNRL…LSGL, and ENLV…VFRQ. Asn273 carries N-linked (GlcNAc...) asparagine glycosylation. The short motif at 281-283 is the Small peptide recognition element; the sequence is FLY. A Small peptide recognition motif is present at residues 329–332; the sequence is DLSM. N-linked (GlcNAc...) asparagine glycosylation is present at Asn345. Residues 351–353 carry the Small peptide recognition motif; the sequence is ELM. Residues Asn358 and Asn369 are each glycosylated (N-linked (GlcNAc...) asparagine). Short sequence motifs (small peptide recognition) lie at residues 399–403 and 425–428; these read IFLGW and DLSQ. An N-linked (GlcNAc...) asparagine glycan is attached at Asn444. The short motif at 447-451 is the Small peptide recognition element; sequence KLLLI. An N-linked (GlcNAc...) asparagine glycan is attached at Asn465. Positions 471–473 match the Small peptide recognition motif; the sequence is RLR. N-linked (GlcNAc...) asparagine glycosylation is found at Asn492, Asn502, Asn521, and Asn524. Residues Asn598 and Asn618 are each glycosylated (N-linked (GlcNAc...) asparagine). Residues Asn665 and Asn707 are each glycosylated (N-linked (GlcNAc...) asparagine). Residues 724–744 traverse the membrane as a helical segment; it reads IAIGLLISVTAVLAVLGVLAV. The Cytoplasmic portion of the chain corresponds to 745-1135; that stretch reads IRAKQMIRDD…ATSNVRPNLK (391 aa). Thr777 bears the Phosphothreonine mark. Residues 785 to 1066 enclose the Protein kinase domain; the sequence is LVEGNVIGKG…KDVAAMLSEI (282 aa). Residues 791 to 799 and Lys813 contribute to the ATP site; that span reads IGKGCSGIV. 2 positions are modified to phosphotyrosine: Tyr868 and Tyr907. The Proton acceptor role is filled by Asp920. Tyr963 and Tyr970 each carry phosphotyrosine. Residues 1077–1135 form a disordered region; it reads DGCSGSCNNGRERGKDDSTSSVMQQTAKYLRSSSTSFSASSLLYSSSSSATSNVRPNLK. A compositionally biased stretch (low complexity) spans 1108–1128; that stretch reads SSSTSFSASSLLYSSSSSATS.

The protein belongs to the protein kinase superfamily. Ser/Thr protein kinase family. In terms of assembly, binds to RGF peptides such as RGF1, GLV5/CLEL1/RGF2, GLV7/CLEL3/RGF3, GLV3/RGF4, GLV10/CLEL7/RGF5 and RGF10/CLELN; these interactions trigger the formation of heterodimers with SERK1. Interacts with UBP13. Phosphorylated and ubiquitinated upon interaction with RGF1, thus leading to activation a subsequent degradation. Stabilized by UBP12 and UBP13-mediated deubiquitination. In terms of processing, autophosphorylated. As to expression, specific to root meristems, especially in lateral root meristems (LRM).

It is found in the membrane. The catalysed reaction is L-seryl-[protein] + ATP = O-phospho-L-seryl-[protein] + ADP + H(+). It carries out the reaction L-threonyl-[protein] + ATP = O-phospho-L-threonyl-[protein] + ADP + H(+). In terms of biological role, together with RGI1, RGI3, RGI4 and RGI5, acts as a receptor of RGF peptides (e.g. RGF1, GLV5/CLEL1/RGF2, GLV7/CLEL3/RGF3, GLV3/RGF4, GLV10/CLEL7/RGF5 and RGF10/CLELN), peptide hormones which maintain the postembryonic root stem cell niche by regulating the expression levels and patterns of the transcription factor PLETHORA (PLT, e.g. PLT1 and PLT2). Links RGF peptides signal with their downstream components. This chain is LRR receptor-like serine/threonine-protein kinase RGI2, found in Arabidopsis thaliana (Mouse-ear cress).